A 43-amino-acid chain; its full sequence is Thymosin beta-12 (43 aa).

Basic and acidic residues-rich tracts occupy residues 1–25 and 33–43; these read MSDK…ETQE and ETIEQEKQATA. The disordered stretch occupies residues 1 to 43; it reads MSDKPDLAEVSNFDKTKLKKTETQEKNPLPTKETIEQEKQATA. Residue S2 is modified to N-acetylserine.

Belongs to the thymosin beta family.

Its subcellular location is the cytoplasm. The protein resides in the cytoskeleton. Plays an important role in the organization of the cytoskeleton. Binds to and sequesters actin monomers (G actin) and therefore inhibits actin polymerization. In Oncorhynchus mykiss (Rainbow trout), this protein is Thymosin beta-12.